The chain runs to 319 residues: Plasmodesmata-located protein 4 (319 aa).

An N-terminal signal peptide occupies residues 1 to 26; the sequence is MVVHLISLLTQTLALIILSLPSIINT. Topologically, residues 27 to 288 are extracellular; it reads SQLDYDTLVF…EGSKVNTGKS (262 aa). Intrachain disulfides connect C39–C127, C103–C112, C115–C140, C177–C247, C223–C232, and C235–C260. Gnk2-homologous domains are found at residues 45 to 149 and 170 to 269; these read NILQ…FERI and HGLI…YHPH. A helical membrane pass occupies residues 289-309; that stretch reads LAIVVGGVAALVFVAIFFMFL. A necessary and sufficient for plasmodesmal targeting region spans residues 289-309; that stretch reads LAIVVGGVAALVFVAIFFMFL. The Cytoplasmic segment spans residues 310-319; it reads KSLRKKGDDC.

The protein belongs to the cysteine-rich repeat secretory protein family. Plasmodesmata-located proteins (PDLD) subfamily. As to quaternary structure, (Microbial infection) Interacts with Grapevine fanleaf virus (GFLV) 2B-MP. In terms of tissue distribution, highly expressed in seeds and roots.

Its subcellular location is the cell membrane. It localises to the cell junction. The protein resides in the plasmodesma. In terms of biological role, modulates cell-to-cell trafficking. The protein is Plasmodesmata-located protein 4 of Arabidopsis thaliana (Mouse-ear cress).